The chain runs to 297 residues: Beta-1,3-galactosyltransferase 5 (297 aa).

Topologically, residues 1–7 (MAFPKMR) are cytoplasmic. A helical; Signal-anchor for type II membrane protein transmembrane segment spans residues 8–28 (LMYVCLLVLGALCVYFSMYSL). Residues 29 to 297 (NLFKEQSFVY…KPRTLLDYWQ (269 aa)) are Lumenal-facing. Asparagine 130, asparagine 174, and asparagine 231 each carry an N-linked (GlcNAc...) asparagine glycan.

This sequence belongs to the glycosyltransferase 31 family.

It localises to the golgi apparatus membrane. It catalyses the reaction a globoside Gb4Cer (d18:1(4E)) + UDP-alpha-D-galactose = a globoside GalGb4Cer (d18:1(4E)) + UDP + H(+). Its pathway is protein modification; protein glycosylation. In terms of biological role, catalyzes the transfer of Gal to GlcNAc-based acceptors with a preference for the core3 O-linked glycan GlcNAc(beta1,3)GalNAc structure. Can use glycolipid LC3Cer as an efficient acceptor. This is Beta-1,3-galactosyltransferase 5 (B3GALT5) from Pan troglodytes (Chimpanzee).